The sequence spans 275 residues: 2,3,4,5-tetrahydropyridine-2,6-dicarboxylate N-succinyltransferase (275 aa).

2 residues coordinate substrate: R108 and D145.

This sequence belongs to the transferase hexapeptide repeat family. Homotrimer.

It is found in the cytoplasm. It carries out the reaction (S)-2,3,4,5-tetrahydrodipicolinate + succinyl-CoA + H2O = (S)-2-succinylamino-6-oxoheptanedioate + CoA. It functions in the pathway amino-acid biosynthesis; L-lysine biosynthesis via DAP pathway; LL-2,6-diaminopimelate from (S)-tetrahydrodipicolinate (succinylase route): step 1/3. The chain is 2,3,4,5-tetrahydropyridine-2,6-dicarboxylate N-succinyltransferase from Roseobacter denitrificans (strain ATCC 33942 / OCh 114) (Erythrobacter sp. (strain OCh 114)).